Consider the following 107-residue polypeptide: Small ribosomal subunit protein bS18c (107 aa).

Residues K85–S95 are compositionally biased toward basic residues. A disordered region spans residues K85 to K107.

Belongs to the bacterial ribosomal protein bS18 family. As to quaternary structure, part of the 30S ribosomal subunit.

Its subcellular location is the plastid. The protein localises to the chloroplast. This Oenothera argillicola (Appalachian evening primrose) protein is Small ribosomal subunit protein bS18c.